The chain runs to 105 residues: Large ribosomal subunit protein uL24 (105 aa).

It belongs to the universal ribosomal protein uL24 family. As to quaternary structure, part of the 50S ribosomal subunit.

In terms of biological role, one of two assembly initiator proteins, it binds directly to the 5'-end of the 23S rRNA, where it nucleates assembly of the 50S subunit. One of the proteins that surrounds the polypeptide exit tunnel on the outside of the subunit. The chain is Large ribosomal subunit protein uL24 from Methylobacillus flagellatus (strain ATCC 51484 / DSM 6875 / VKM B-1610 / KT).